A 200-amino-acid chain; its full sequence is NADH-quinone oxidoreductase subunit C 1 (200 aa).

This sequence belongs to the complex I 30 kDa subunit family. NDH-1 is composed of 14 different subunits. Subunits NuoB, C, D, E, F, and G constitute the peripheral sector of the complex.

It is found in the cell inner membrane. It catalyses the reaction a quinone + NADH + 5 H(+)(in) = a quinol + NAD(+) + 4 H(+)(out). NDH-1 shuttles electrons from NADH, via FMN and iron-sulfur (Fe-S) centers, to quinones in the respiratory chain. The immediate electron acceptor for the enzyme in this species is believed to be ubiquinone. Couples the redox reaction to proton translocation (for every two electrons transferred, four hydrogen ions are translocated across the cytoplasmic membrane), and thus conserves the redox energy in a proton gradient. The sequence is that of NADH-quinone oxidoreductase subunit C 1 from Rhizobium etli (strain CIAT 652).